A 325-amino-acid chain; its full sequence is Golgi to ER traffic protein 4 homolog A (325 aa).

2 disordered regions span residues 1 to 22 (MAAA…GGVQ) and 306 to 325 (SGED…IELD). Residues 307–317 (GEDDDVEDGQE) are compositionally biased toward acidic residues.

The protein belongs to the GET4 family. Component of the bag6/bat3 complex.

The protein localises to the cytoplasm. The protein resides in the cytosol. Its function is as follows. As part of a cytosolic protein quality control complex, the bag6/bat3 complex, maintains misfolded and hydrophobic patches-containing proteins in a soluble state and participates in their proper delivery to the endoplasmic reticulum or alternatively can promote their sorting to the proteasome where they undergo degradation. The bag6/bat3 complex is involved in the post-translational delivery of tail-anchored/type II transmembrane proteins to the endoplasmic reticulum membrane. Similarly, the bag6/bat3 complex also functions as a sorting platform for proteins of the secretory pathway that are mislocalized to the cytosol either delivering them to the proteasome for degradation or to the endoplasmic reticulum. The bag6/bat3 complex also plays a role in the endoplasmic reticulum-associated degradation (ERAD), a quality control mechanism that eliminates unwanted proteins of the endoplasmic reticulum through their retrotranslocation to the cytosol and their targeting to the proteasome. It maintains these retrotranslocated proteins in an unfolded yet soluble state condition in the cytosol to ensure their proper delivery to the proteasome. In Xenopus laevis (African clawed frog), this protein is Golgi to ER traffic protein 4 homolog A (get4-a).